A 577-amino-acid polypeptide reads, in one-letter code: Arginine--tRNA ligase (577 aa).

Positions 122 to 132 match the 'HIGH' region motif; that stretch reads PNVAKEMHVGH.

The protein belongs to the class-I aminoacyl-tRNA synthetase family. Monomer.

Its subcellular location is the cytoplasm. It catalyses the reaction tRNA(Arg) + L-arginine + ATP = L-arginyl-tRNA(Arg) + AMP + diphosphate. The polypeptide is Arginine--tRNA ligase (Salmonella newport (strain SL254)).